The chain runs to 173 residues: Small ribosomal subunit protein uS5 (173 aa).

The S5 DRBM domain occupies Leu18–Val81.

It belongs to the universal ribosomal protein uS5 family. Part of the 30S ribosomal subunit. Contacts proteins S4 and S8.

With S4 and S12 plays an important role in translational accuracy. Its function is as follows. Located at the back of the 30S subunit body where it stabilizes the conformation of the head with respect to the body. This chain is Small ribosomal subunit protein uS5, found in Bordetella petrii (strain ATCC BAA-461 / DSM 12804 / CCUG 43448).